The chain runs to 287 residues: Putative syntaxin-4 (287 aa).

The Cytoplasmic segment spans residues 1–262 (MHQISGINAA…NRKWKIVTCI (262 aa)). Positions 65–97 (KCRKLNDHVDKFIAQARGIRRRLADASEELVQY) form a coiled coil. The t-SNARE coiled-coil homology domain maps to 184–246 (FDDMKNRATD…EQAQQNVRQA (63 aa)). Residues 263-283 (ALIVLLLVVVYLLSHFLGAII) form a helical; Anchor for type IV membrane protein membrane-spanning segment. The Extracellular portion of the chain corresponds to 284 to 287 (PGWK).

This sequence belongs to the syntaxin family.

It is found in the membrane. Potentially involved in docking of synaptic vesicles at presynaptic active zones. This is Putative syntaxin-4 (syx-4) from Caenorhabditis elegans.